Reading from the N-terminus, the 485-residue chain is Rhamnulokinase (485 aa).

10–14 contributes to the ATP binding site; sequence ASSGR. Substrate contacts are provided by residues Ala-78 and 233 to 235; that span reads HDT. Catalysis depends on Asp-234, which acts as the Proton acceptor. Thr-256 serves as a coordination point for ATP. Position 293 (Asn-293) interacts with substrate. ATP is bound at residue Gln-301. Cys-351 and Cys-368 are disulfide-bonded. Gly-400 lines the ATP pocket.

Belongs to the rhamnulokinase family. The cofactor is Mg(2+).

The enzyme catalyses L-rhamnulose + ATP = L-rhamnulose 1-phosphate + ADP + H(+). It participates in carbohydrate degradation; L-rhamnose degradation; glycerone phosphate from L-rhamnose: step 2/3. Its function is as follows. Involved in the catabolism of L-rhamnose (6-deoxy-L-mannose). Catalyzes the transfer of the gamma-phosphate group from ATP to the 1-hydroxyl group of L-rhamnulose to yield L-rhamnulose 1-phosphate. This chain is Rhamnulokinase, found in Bacillus subtilis (strain 168).